The sequence spans 318 residues: Ribosomal RNA small subunit methyltransferase H (318 aa).

S-adenosyl-L-methionine-binding positions include 35–37 (AGH), Asp-55, Phe-84, Asp-105, and Gln-112. The interval 294–318 (SDSELSENNRSRSAKLRIAEKIKSR) is disordered.

This sequence belongs to the methyltransferase superfamily. RsmH family.

It is found in the cytoplasm. It carries out the reaction cytidine(1402) in 16S rRNA + S-adenosyl-L-methionine = N(4)-methylcytidine(1402) in 16S rRNA + S-adenosyl-L-homocysteine + H(+). Functionally, specifically methylates the N4 position of cytidine in position 1402 (C1402) of 16S rRNA. The chain is Ribosomal RNA small subunit methyltransferase H from Enterococcus faecalis (strain ATCC 700802 / V583).